The chain runs to 131 residues: Synaptobrevin-like protein (131 aa).

Residues 1–81 (MLHITTMTDK…KRKFWWKNCK (81 aa)) lie on the Cytoplasmic side of the membrane. Positions 18 to 78 (RLQQTQAQVN…GKLKRKFWWK (61 aa)) constitute a v-SNARE coiled-coil homology domain. The helical; Anchor for type IV membrane protein transmembrane segment at 82–102 (MLAVLGVLVVILIIVLIVWVV) threads the bilayer. The Vesicular portion of the chain corresponds to 103 to 131 (SEQKNKVEQSEHSSHHLVMDNSSHLLSEQ). Positions 112–131 (SEHSSHHLVMDNSSHLLSEQ) are disordered. Residues 122–131 (DNSSHLLSEQ) show a composition bias toward polar residues.

It belongs to the synaptobrevin family.

It localises to the cytoplasmic vesicle. The protein resides in the secretory vesicle. The protein localises to the synaptic vesicle membrane. It is found in the synapse. Its subcellular location is the synaptosome. Its function is as follows. Unknown, but synaptobrevins are presumed to be involved in targeting and fusion of synaptic vesicles with the presynaptic membrane as well as in neurotransmitter release. This Schistosoma mansoni (Blood fluke) protein is Synaptobrevin-like protein.